Reading from the N-terminus, the 338-residue chain is Lumican (338 aa).

The signal sequence occupies residues Met-1–Gly-18. Residue Gln-19 is modified to Pyrrolidone carboxylic acid. Sulfotyrosine occurs at positions 20, 21, 23, and 30. The region spanning Phe-28–Pro-66 is the LRRNT domain. 8 LRR repeats span residues Gly-67–Asn-88, Asp-91–Lys-114, Gln-117–Lys-137, Ser-138–Val-159, Asn-160–Lys-181, Ser-185–Thr-205, Ser-206–Arg-227, and Gly-230–Ser-250. An N-linked (GlcNAc...) (keratan sulfate) asparagine glycan is attached at Asn-88. A glycan (N-linked (GlcNAc...) (keratan sulfate) asparagine) is linked at Asn-127. N-linked (GlcNAc...) (keratan sulfate) asparagine glycosylation is present at Asn-160. Asn-252 carries N-linked (GlcNAc...) (keratan sulfate) asparagine glycosylation. LRR repeat units follow at residues Ser-255–Leu-276 and Glu-277–Lys-296. An intrachain disulfide couples Cys-295 to Cys-328. Ser-304 carries the post-translational modification Phosphoserine. The stretch at Lys-305–Tyr-326 is one LRR 11 repeat.

It belongs to the small leucine-rich proteoglycan (SLRP) family. SLRP class II subfamily. In terms of assembly, binds to laminin. In terms of processing, contains keratan sulfate.

It is found in the secreted. The protein resides in the extracellular space. It localises to the extracellular matrix. This is Lumican (Lum) from Rattus norvegicus (Rat).